The following is a 160-amino-acid chain: Sperm protein associated with the nucleus on the X chromosome N2 (160 aa).

2 disordered regions span residues 1–48 (MEKP…TSEY) and 64–160 (SNQL…GEED). A compositionally biased stretch (basic and acidic residues) spans 10–35 (GEKRKSPCDSNNRNDEMQETPNRDLA). A compositionally biased stretch (polar residues) spans 64-79 (SNQLENDQSQENSVNP). Residues 81-97 (QEEEDEGSSQEDEDLDS) show a composition bias toward acidic residues. A compositionally biased stretch (basic and acidic residues) spans 136 to 148 (SSERSSQEEKDPD).

Belongs to the SPAN-X family.

The chain is Sperm protein associated with the nucleus on the X chromosome N2 (SPANXN2) from Pongo pygmaeus (Bornean orangutan).